The sequence spans 486 residues: Aspartyl/glutamyl-tRNA(Asn/Gln) amidotransferase subunit B (486 aa).

This sequence belongs to the GatB/GatE family. GatB subfamily. Heterotrimer of A, B and C subunits.

The catalysed reaction is L-glutamyl-tRNA(Gln) + L-glutamine + ATP + H2O = L-glutaminyl-tRNA(Gln) + L-glutamate + ADP + phosphate + H(+). It carries out the reaction L-aspartyl-tRNA(Asn) + L-glutamine + ATP + H2O = L-asparaginyl-tRNA(Asn) + L-glutamate + ADP + phosphate + 2 H(+). Allows the formation of correctly charged Asn-tRNA(Asn) or Gln-tRNA(Gln) through the transamidation of misacylated Asp-tRNA(Asn) or Glu-tRNA(Gln) in organisms which lack either or both of asparaginyl-tRNA or glutaminyl-tRNA synthetases. The reaction takes place in the presence of glutamine and ATP through an activated phospho-Asp-tRNA(Asn) or phospho-Glu-tRNA(Gln). This Azoarcus sp. (strain BH72) protein is Aspartyl/glutamyl-tRNA(Asn/Gln) amidotransferase subunit B.